The sequence spans 99 residues: Transcriptional repressor PagR (99 aa).

Residues 9-99 (IEYMSLEDDA…GIIKLLNPIQ (91 aa)) form the HTH arsR-type domain. The segment at residues 43–62 (NVTQIIQILKLPQSTVSQHL) is a DNA-binding region (H-T-H motif).

Functionally, represses the expression of the pagA and atxA genes. This is Transcriptional repressor PagR (pagR) from Bacillus anthracis.